The sequence spans 191 residues: MTQQITLIKDKILSDNYFTLHNITYDLTRKDGEVIRHKREVYDRGNGATILLYNAKKKTVVLIRQFRVATWVNGNESGQLIETCAGLLDNDEPEVCIRKEAIEETGYEVGEVRKLFELYMSPGGVTELIHFFIAEYSDSQRANAGGGVEDEDIEVLELPFSQALEMIKTGEIRDGKTVLLLNYLQTSHLMD.

Residues Tyr17, Lys38–Glu40, Arg67, and Ala85–Leu87 each bind GDP-alpha-D-mannose. The 138-residue stretch at Asp43–Leu180 folds into the Nudix hydrolase domain. Mg(2+) is bound by residues Ala85, Glu100, and Glu104. Residues Gly86 to Gly106 carry the Nudix box motif. GDP-alpha-D-mannose-binding positions include Glu104, Glu127, Asp150–Glu151, and Lys176. Mg(2+) is bound at residue Glu151.

It belongs to the Nudix hydrolase family. NudK subfamily. Homodimer. Mg(2+) serves as cofactor.

It catalyses the reaction GDP-alpha-D-mannose + H2O = alpha-D-mannose 1-phosphate + GMP + 2 H(+). In terms of biological role, nucleoside diphosphate sugar hydrolase that hydrolyzes GDP-mannose as its preferred substrate, yielding GMP and mannose-1-phosphate. In Escherichia coli (strain SMS-3-5 / SECEC), this protein is GDP-mannose pyrophosphatase (nudK).